The following is a 275-amino-acid chain: 2,3,4,5-tetrahydropyridine-2,6-dicarboxylate N-succinyltransferase (275 aa).

Substrate is bound by residues R105 and D142.

Belongs to the transferase hexapeptide repeat family. In terms of assembly, homotrimer.

It is found in the cytoplasm. It catalyses the reaction (S)-2,3,4,5-tetrahydrodipicolinate + succinyl-CoA + H2O = (S)-2-succinylamino-6-oxoheptanedioate + CoA. Its pathway is amino-acid biosynthesis; L-lysine biosynthesis via DAP pathway; LL-2,6-diaminopimelate from (S)-tetrahydrodipicolinate (succinylase route): step 1/3. In Pectobacterium atrosepticum (strain SCRI 1043 / ATCC BAA-672) (Erwinia carotovora subsp. atroseptica), this protein is 2,3,4,5-tetrahydropyridine-2,6-dicarboxylate N-succinyltransferase.